The sequence spans 484 residues: MSSPLASLSKTRKVPLESESVNPGRRGIRVYGNEDEVDMWNDGQDSEEKISLPSCYGGIGAPVSRQGPHDSELMASMTRKLQELEQQLQAQNDEMLSKERKILDLEDLVQTLQQHQNNAALQRQEELETQCIQLQRQIGEMERFLSDYGLQWVGEPMDQENSEEKTVSENDERDWMKAKKFWKPGDSFVPPEVDFDKLMASLQDLSELVEGEAQVTPVPGGARFRTLEPIPLKVYRNGIMMFDGPFRPFYDPSTQRCLRDILDGFFPSELQRLYPDGVPFKVSDLRNQIYPEDGLGQFPGEGRVVGRQKMRKVTDRVEETSGSRMTAEQFLNRLPKCIIRQGEVIDIRGPIRDTLQNCCPMPARIQEIIVETPALASERQRSQESPDMPMPLLSMLRIKSENGEQAFLLMMWPEDTIGDVRKLLAQARDMDSAAFEILSTFPPTVYQDDTVTLQAAGLVPNATLLLRTRRALLSNPISRPGSLP.

The tract at residues 1-28 is disordered; it reads MSSPLASLSKTRKVPLESESVNPGRRGI. The stretch at 69 to 147 forms a coiled coil; that stretch reads HDSELMASMT…IGEMERFLSD (79 aa). Positions 227–291 constitute an SEP domain; that stretch reads LEPIPLKVYR…VSDLRNQIYP (65 aa). A UBX domain is found at 389–466; it reads PMPLLSMLRI…GLVPNATLLL (78 aa). A phosphoserine mark is found at S478 and S482.

Interacts with GNA12, GNA13, RND1, RND2 and RND3.

The protein localises to the cytoplasm. It localises to the cytoskeleton. In terms of biological role, may be involved in the reorganization of actin cytoskeleton mediated by RND1, RND2 and RND3. Promotes RHOA activation mediated by GNA12 and GNA13. In Mus musculus (Mouse), this protein is UBX domain-containing protein 11 (Ubxn11).